Here is a 5202-residue protein sequence, read N- to C-terminus: Usherin (5202 aa).

The N-terminal stretch at 1–31 is a signal peptide; the sequence is MNCPVLSLGSGFLFQVIEMLIFAYFASISLT. Residues 32 to 5042 lie on the Extracellular side of the membrane; it reads ESRGLFPRLE…KSTEFYSELW (5011 aa). Positions 271–517 constitute a Laminin N-terminal domain; that stretch reads QDFRLYQVAL…AVDEITISGR (247 aa). Residues Asn-361 and Asn-451 are each glycosylated (N-linked (GlcNAc...) asparagine). 40 cysteine pairs are disulfide-bonded: Cys-518/Cys-527, Cys-520/Cys-536, Cys-538/Cys-549, Cys-552/Cys-572, Cys-575/Cys-584, Cys-577/Cys-605, Cys-608/Cys-617, Cys-620/Cys-638, Cys-641/Cys-655, Cys-643/Cys-662, Cys-664/Cys-673, Cys-676/Cys-691, Cys-694/Cys-708, Cys-696/Cys-715, Cys-717/Cys-726, Cys-729/Cys-744, Cys-747/Cys-759, Cys-749/Cys-766, Cys-768/Cys-777, Cys-780/Cys-792, Cys-795/Cys-808, Cys-797/Cys-815, Cys-817/Cys-826, Cys-829/Cys-844, Cys-847/Cys-861, Cys-849/Cys-868, Cys-870/Cys-879, Cys-882/Cys-897, Cys-900/Cys-913, Cys-902/Cys-920, Cys-922/Cys-931, Cys-934/Cys-948, Cys-951/Cys-963, Cys-953/Cys-970, Cys-972/Cys-982, Cys-985/Cys-999, Cys-1002/Cys-1014, Cys-1004/Cys-1021, Cys-1023/Cys-1032, and Cys-1035/Cys-1050. Laminin EGF-like domains lie at 518-574, 575-640, 641-693, 694-746, 747-794, 795-846, 847-899, 900-950, 951-1001, and 1002-1052; these read CQCH…NCKP, CQCN…VCKP, CDCD…GCSP, CNCN…GCEP, CQCN…NCKA, CDCD…LCLP, CNCD…HCQM, CECD…GCLP, CSCH…RCQP, and CNCH…GCSK. Residues Asn-587 and Asn-611 are each glycosylated (N-linked (GlcNAc...) asparagine). N-linked (GlcNAc...) asparagine glycosylation is present at Asn-650. The N-linked (GlcNAc...) asparagine glycan is linked to Asn-697. N-linked (GlcNAc...) asparagine glycosylation is found at Asn-839, Asn-856, and Asn-862. Residue Asn-888 is glycosylated (N-linked (GlcNAc...) asparagine). Residue Asn-944 is glycosylated (N-linked (GlcNAc...) asparagine). Asn-1011 carries N-linked (GlcNAc...) asparagine glycosylation. Fibronectin type-III domains follow at residues 1058 to 1146, 1148 to 1244, 1245 to 1363, and 1364 to 1468; these read PPPR…TKPG, PEGN…APPQ, RLSP…SAPV, and FMIP…AAPA. 3 N-linked (GlcNAc...) asparagine glycosylation sites follow: Asn-1071, Asn-1151, and Asn-1174. N-linked (GlcNAc...) asparagine glycosylation is found at Asn-1379, Asn-1388, Asn-1479, and Asn-1635. Laminin G-like domains lie at 1517–1709 and 1714–1891; these read MKGI…WEGC and NEGA…LDGC. Cys-1672 and Cys-1709 are oxidised to a cystine. Asn-1779 is a glycosylation site (N-linked (GlcNAc...) asparagine). Cys-1862 and Cys-1891 are joined by a disulfide. Fibronectin type-III domains follow at residues 1869–1955, 1957–2054, 2055–2144, 2145–2239, 2243–2330, 2331–2433, 2437–2531, 2535–2622, 2624–2722, 2726–2819, 2820–2923, 2927–3018, 3022–3112, and 3113–3209; these read TRGA…AAPQ, VPTP…TPQE, APQE…LPPE, HVDS…TDED, GVPA…APPE, GTVN…MPPG, GVLP…TAED, PVVP…TLPG, PEGI…TRPS, GVQP…THPT, VPQN…TLAG, RGAN…TCDG, GMLP…TPSD, and IPTP…CCEE. Asn-1903, Asn-2011, Asn-2014, Asn-2048, Asn-2130, Asn-2182, Asn-2195, Asn-2258, Asn-2285, Asn-2322, Asn-2377, Asn-2382, Asn-2407, and Asn-2413 each carry an N-linked (GlcNAc...) asparagine glycan. N-linked (GlcNAc...) asparagine glycans are attached at residues Asn-2581, Asn-2584, Asn-2656, Asn-2710, Asn-2770, and Asn-2788. Residues Asn-2930, Asn-2937, Asn-2970, Asn-3032, and Asn-3099 are each glycosylated (N-linked (GlcNAc...) asparagine). Residues Asn-3217, Asn-3330, Asn-3419, and Asn-3433 are each glycosylated (N-linked (GlcNAc...) asparagine). 2 disulfides stabilise this stretch: Cys-3371–Cys-3444 and Cys-3399–Cys-3425. Fibronectin type-III domains are found at residues 3403–3497, 3501–3589, 3592–3682, 3684–3770, 3774–3865, 3866–3963, 3964–4067, 4068–4153, 4157–4261, 4262–4357, 4358–4445, 4446–4530, 4534–4630, 4636–4733, 4734–4827, and 4828–4927; these read CPAS…TKED, GVSP…TQGV, SILP…AAPE, VWVT…TPMS, EIYP…TPEA, APMD…TLEA, PPQD…SSPS, GLRN…TDEA, SQLA…TLQA, PPEG…AAPS, EVSP…ALPE, NMDS…TSPS, GMEP…TPEI, PPPH…TGPA, PPEG…THPA, and PPSG…SFTT. 5 N-linked (GlcNAc...) asparagine glycosylation sites follow: Asn-3653, Asn-3694, Asn-3733, Asn-3780, and Asn-3849. Asn-3984 is a glycosylation site (N-linked (GlcNAc...) asparagine). Residues Asn-4202, Asn-4226, Asn-4317, and Asn-4418 are each glycosylated (N-linked (GlcNAc...) asparagine). Positions 4518–4541 are disordered; the sequence is ILSPLVKDRTSPSAPSGMEPPKLQ. N-linked (GlcNAc...) asparagine glycosylation is found at Asn-4564, Asn-4583, Asn-4691, Asn-4754, and Asn-4800. Residues Asn-4943 and Asn-4950 are each glycosylated (N-linked (GlcNAc...) asparagine). Residues 5043–5063 traverse the membrane as a helical segment; it reads FIVLMAMLGLILLAIFLSLIL. Over 5064 to 5202 the chain is Cytoplasmic; the sequence is QRKIHKEPYI…ERTTFTDTHL (139 aa). The PDZ-binding motif lies at 5200–5202; it reads THL.

In terms of assembly, interacts with collagen IV and fibronectin via its laminin EGF-like domains. Interaction with collagen may be required for stable integration into the basement membrane. Interacts with NINL. Interacts with USH1C. Component of USH2 complex, composed of ADGRV1, PDZD7, USH2A and WHRN. Interacts with ADGRV1/MASS1 (via N-terminal PDZ domain). Interacts (via the cytoplasmic region) with WHRN. Interacts (via the cytoplasmic region) with PDZD7. Interacts (via the cytoplasmic region) with VEZT and MYO7A (via MyTH4-FERM domains); the interaction associates VEZT with the USH2 complex at the stereocilia base. In terms of tissue distribution, present in the basement membrane of many, but not all tissues. Expressed in retina, cochlea, small and large intestine, pancreas, bladder, prostate, esophagus, trachea, thymus, salivary glands, placenta, ovary, fallopian tube, uterus and testis. Absent in many other tissues such as heart, lung, liver, kidney and brain. In the retina, it is present in the basement membranes in the Bruch's layer choroid capillary basement membranes, where it localizes just beneath the retinal pigment epithelial cells (at protein level). Weakly expressed. Isoform 2 is expressed in fetal eye, cochlea and heart, and at very low level in brain, CNS, intestine, skeleton, tongue, kidney and lung. Isoform 2 is not expressed in stomach and liver. In adult tissues, isoform 2 is expressed in neural retina and testis, and at low level in brain, heart, kidney and liver. Isoform 1 displays a similar pattern of expression but is expressed at very low level in fetal cochlea.

The protein resides in the cell projection. It localises to the stereocilium membrane. The protein localises to the secreted. Functionally, involved in hearing and vision as member of the USH2 complex. In the inner ear, required for the maintenance of the hair bundle ankle formation, which connects growing stereocilia in developing cochlear hair cells. In retina photoreceptors, the USH2 complex is required for the maintenance of periciliary membrane complex that seems to play a role in regulating intracellular protein transport. This chain is Usherin (USH2A), found in Homo sapiens (Human).